Consider the following 273-residue polypeptide: 1,4-dihydroxy-2-naphthoyl-CoA synthase (273 aa).

Residues arginine 34, 73–77 (SGGDQ), tyrosine 85, 117–121 (YAVGG), threonine 143, serine 149, tyrosine 246, and lysine 261 contribute to the substrate site. Hydrogencarbonate is bound at residue 142 to 144 (QTG). Basic and acidic residues predominate over residues 254–265 (GRDAFKEKRDPD). The disordered stretch occupies residues 254 to 273 (GRDAFKEKRDPDFDQFPKFP).

The protein belongs to the enoyl-CoA hydratase/isomerase family. MenB subfamily. The cofactor is hydrogencarbonate.

It carries out the reaction 2-succinylbenzoyl-CoA + H(+) = 1,4-dihydroxy-2-naphthoyl-CoA + H2O. It participates in quinol/quinone metabolism; 1,4-dihydroxy-2-naphthoate biosynthesis; 1,4-dihydroxy-2-naphthoate from chorismate: step 6/7. Its pathway is quinol/quinone metabolism; menaquinone biosynthesis. Its function is as follows. Converts o-succinylbenzoyl-CoA (OSB-CoA) to 1,4-dihydroxy-2-naphthoyl-CoA (DHNA-CoA). This is 1,4-dihydroxy-2-naphthoyl-CoA synthase from Staphylococcus aureus (strain MSSA476).